The following is a 470-amino-acid chain: Serine--tRNA ligase (470 aa).

272–274 (TAE) provides a ligand contact to L-serine. 303–305 (RAE) is a binding site for ATP. Position 326 (E326) interacts with L-serine. 393 to 396 (EISS) provides a ligand contact to ATP. Residue S428 participates in L-serine binding.

This sequence belongs to the class-II aminoacyl-tRNA synthetase family. Type-1 seryl-tRNA synthetase subfamily. Homodimer. The tRNA molecule binds across the dimer.

It is found in the cytoplasm. The catalysed reaction is tRNA(Ser) + L-serine + ATP = L-seryl-tRNA(Ser) + AMP + diphosphate + H(+). It carries out the reaction tRNA(Sec) + L-serine + ATP = L-seryl-tRNA(Sec) + AMP + diphosphate + H(+). Its pathway is aminoacyl-tRNA biosynthesis; selenocysteinyl-tRNA(Sec) biosynthesis; L-seryl-tRNA(Sec) from L-serine and tRNA(Sec): step 1/1. In terms of biological role, catalyzes the attachment of serine to tRNA(Ser). Is also able to aminoacylate tRNA(Sec) with serine, to form the misacylated tRNA L-seryl-tRNA(Sec), which will be further converted into selenocysteinyl-tRNA(Sec). The protein is Serine--tRNA ligase of Nitrobacter hamburgensis (strain DSM 10229 / NCIMB 13809 / X14).